Here is a 446-residue protein sequence, read N- to C-terminus: Aspartokinase (446 aa).

The 45-residue stretch at 250–294 (IPLVKSTYMEESALNTKHSTKIDIPEDASGSTYKLPIELALQNRY) folds into the RPE1 insert domain.

Belongs to the aspartokinase family.

It catalyses the reaction L-aspartate + ATP = 4-phospho-L-aspartate + ADP. Its pathway is amino-acid biosynthesis; L-lysine biosynthesis via DAP pathway; (S)-tetrahydrodipicolinate from L-aspartate: step 1/4. It participates in amino-acid biosynthesis; L-methionine biosynthesis via de novo pathway; L-homoserine from L-aspartate: step 1/3. The protein operates within amino-acid biosynthesis; L-threonine biosynthesis; L-threonine from L-aspartate: step 1/5. The chain is Aspartokinase (lysC) from Rickettsia prowazekii (strain Madrid E).